We begin with the raw amino-acid sequence, 499 residues long: Glycerol kinase (499 aa).

T14 serves as a coordination point for ADP. Positions 14, 15, and 16 each coordinate ATP. T14 lines the sn-glycerol 3-phosphate pocket. Residue R18 participates in ADP binding. Positions 84, 85, 136, and 245 each coordinate sn-glycerol 3-phosphate. Glycerol-binding residues include R84, E85, Y136, D245, and Q246. Residues T267 and G310 each contribute to the ADP site. 4 residues coordinate ATP: T267, G310, Q314, and G411. ADP contacts are provided by G411 and N415.

Belongs to the FGGY kinase family.

The catalysed reaction is glycerol + ATP = sn-glycerol 3-phosphate + ADP + H(+). Its pathway is polyol metabolism; glycerol degradation via glycerol kinase pathway; sn-glycerol 3-phosphate from glycerol: step 1/1. With respect to regulation, inhibited by fructose 1,6-bisphosphate (FBP). Functionally, key enzyme in the regulation of glycerol uptake and metabolism. Catalyzes the phosphorylation of glycerol to yield sn-glycerol 3-phosphate. This Nitrosomonas eutropha (strain DSM 101675 / C91 / Nm57) protein is Glycerol kinase.